The primary structure comprises 468 residues: Probable soluble pyridine nucleotide transhydrogenase (468 aa).

33–42 (ERGRMLGGVC) contacts FAD.

This sequence belongs to the class-I pyridine nucleotide-disulfide oxidoreductase family. FAD is required as a cofactor.

Its subcellular location is the cytoplasm. The catalysed reaction is NAD(+) + NADPH = NADH + NADP(+). In terms of biological role, conversion of NADPH, generated by peripheral catabolic pathways, to NADH, which can enter the respiratory chain for energy generation. The sequence is that of Probable soluble pyridine nucleotide transhydrogenase (sthA) from Mycobacterium bovis (strain ATCC BAA-935 / AF2122/97).